A 552-amino-acid chain; its full sequence is Protein TRM32 (552 aa).

Positions 295 to 379 (TDLPRDSSTS…NKTAEKTETL (85 aa)) are disordered. The span at 331–351 (VRAEKEEKYEVQEERSQENHL) shows a compositional bias: basic and acidic residues. Over residues 352 to 371 (DSSNQRILQQEPDSVPSTNK) the composition is skewed to polar residues.

This chain is Protein TRM32 (TRM32), found in Arabidopsis thaliana (Mouse-ear cress).